We begin with the raw amino-acid sequence, 451 residues long: Aminodeoxychorismate synthase component 1 (451 aa).

Residues Ser-34, 41-44, and 238-240 each bind L-tryptophan; these read HNRF and PFS. Catalysis depends on Glu-256, which acts as the Proton donor. Lys-272 serves as the catalytic N6-(4-deoxychorismate)-lysine intermediate.

Belongs to the anthranilate synthase component I family. As to quaternary structure, monomer. Heterodimer consisting of two non-identical subunits: a glutamine amidotransferase subunit (PabA) and a aminodeoxychorismate synthase subunit (PabB). Requires Mg(2+) as cofactor.

The enzyme catalyses chorismate + L-glutamine = 4-amino-4-deoxychorismate + L-glutamate. It participates in cofactor biosynthesis; tetrahydrofolate biosynthesis; 4-aminobenzoate from chorismate: step 1/2. Part of a heterodimeric complex that catalyzes the two-step biosynthesis of 4-amino-4-deoxychorismate (ADC), a precursor of p-aminobenzoate (PABA) and tetrahydrofolate. In the first step, a glutamine amidotransferase (PabA) generates ammonia as a substrate that, along with chorismate, is used in the second step, catalyzed by aminodeoxychorismate synthase (PabB) to produce ADC. The polypeptide is Aminodeoxychorismate synthase component 1 (pabB) (Klebsiella aerogenes (Enterobacter aerogenes)).